Here is a 1213-residue protein sequence, read N- to C-terminus: DNA-directed RNA polymerase subunit beta' (1213 aa).

Zn(2+)-binding residues include Cys-60, Cys-62, Cys-75, and Cys-78. Mg(2+)-binding residues include Asp-450, Asp-452, and Asp-454. Residues Cys-819, Cys-893, Cys-900, and Cys-903 each contribute to the Zn(2+) site.

It belongs to the RNA polymerase beta' chain family. In terms of assembly, the RNAP catalytic core consists of 2 alpha, 1 beta, 1 beta' and 1 omega subunit. When a sigma factor is associated with the core the holoenzyme is formed, which can initiate transcription. The cofactor is Mg(2+). Zn(2+) is required as a cofactor.

It catalyses the reaction RNA(n) + a ribonucleoside 5'-triphosphate = RNA(n+1) + diphosphate. Its function is as follows. DNA-dependent RNA polymerase catalyzes the transcription of DNA into RNA using the four ribonucleoside triphosphates as substrates. This chain is DNA-directed RNA polymerase subunit beta', found in Streptococcus pyogenes serotype M2 (strain MGAS10270).